The following is a 320-amino-acid chain: Cytochrome f (320 aa).

The first 35 residues, 1–35 (MQTRNNFSWIKEQITRSISVSLMIYIITRASISNA), serve as a signal peptide directing secretion. Residues tyrosine 36, cysteine 56, cysteine 59, and histidine 60 each coordinate heme. A helical membrane pass occupies residues 286–306 (VQGLLFFLASVILAQIFLVLK).

The protein belongs to the cytochrome f family. In terms of assembly, the 4 large subunits of the cytochrome b6-f complex are cytochrome b6, subunit IV (17 kDa polypeptide, petD), cytochrome f and the Rieske protein, while the 4 small subunits are PetG, PetL, PetM and PetN. The complex functions as a dimer. Requires heme as cofactor.

The protein resides in the plastid. Its subcellular location is the chloroplast thylakoid membrane. In terms of biological role, component of the cytochrome b6-f complex, which mediates electron transfer between photosystem II (PSII) and photosystem I (PSI), cyclic electron flow around PSI, and state transitions. The polypeptide is Cytochrome f (Lactuca sativa (Garden lettuce)).